The following is a 139-amino-acid chain: Putative nickel-responsive regulator (139 aa).

His79, His90, His92, and Cys98 together coordinate Ni(2+).

Belongs to the transcriptional regulatory CopG/NikR family. It depends on Ni(2+) as a cofactor.

Transcriptional regulator. This chain is Putative nickel-responsive regulator, found in Geobacter metallireducens (strain ATCC 53774 / DSM 7210 / GS-15).